The primary structure comprises 72 residues: uncharacterized protein (72 aa).

A disordered region spans residues 1-53 (MTNEPSTSTPTSTSTSTSTSTSTSTTTLTSTSSTPTSTSTSTSTSTSTSTSTS).

This is an uncharacterized protein from Dictyostelium discoideum (Social amoeba).